Reading from the N-terminus, the 523-residue chain is GMP synthase [glutamine-hydrolyzing] (523 aa).

Positions 8–205 (KILILDFGSQ…VVNICGCTTN (198 aa)) constitute a Glutamine amidotransferase type-1 domain. C85 (nucleophile) is an active-site residue. Catalysis depends on residues H179 and E181. In terms of domain architecture, GMPS ATP-PPase spans 206–398 (WTPENIIEDA…LGLPAEMLNR (193 aa)). 233–239 (SGGVDSS) is a binding site for ATP.

Homodimer.

It carries out the reaction XMP + L-glutamine + ATP + H2O = GMP + L-glutamate + AMP + diphosphate + 2 H(+). It participates in purine metabolism; GMP biosynthesis; GMP from XMP (L-Gln route): step 1/1. Catalyzes the synthesis of GMP from XMP. This is GMP synthase [glutamine-hydrolyzing] from Mannheimia succiniciproducens (strain KCTC 0769BP / MBEL55E).